We begin with the raw amino-acid sequence, 587 residues long: Inorganic phosphate transporter PHO84 (587 aa).

Topologically, residues 1–67 (MSSVNKDTIH…FGWQQVKTIS (67 aa)) are extracellular. K6 participates in a covalent cross-link: Glycyl lysine isopeptide (Lys-Gly) (interchain with G-Cter in ubiquitin). The helical transmembrane segment at 68-88 (IAGVGFLTDSYDIFAINLGIT) threads the bilayer. At 89 to 108 (MMSYVYWHGSMPGPSQTLLK) the chain is on the cytoplasmic side. A helical transmembrane segment spans residues 109–129 (VSTSVGTVIGQFGFGTLADIV). Over 130 to 133 (GRKR) the chain is Extracellular. Residues 134 to 154 (IYGMELIIMIVCTILQTTVAH) form a helical membrane-spanning segment. Residues 155–156 (SP) lie on the Cytoplasmic side of the membrane. The helical transmembrane segment at 157-177 (AINFVAVLTFYRIVMGIGIGG) threads the bilayer. The Extracellular segment spans residues 178 to 201 (DYPLSSIITSEFATTKWRGAIMGA). Residues 202–222 (VFANQAWGQISGGIIALILVA) form a helical membrane-spanning segment. At 223–250 (AYKGELEYANSGAECDARCQKACDQMWR) the chain is on the cytoplasmic side. A helical transmembrane segment spans residues 251 to 271 (ILIGLGTVLGLACLYFRLTIP). At 272-345 (ESPRYQLDVN…RHFGQWKYGK (74 aa)) the chain is on the extracellular side. K298 is covalently cross-linked (Glycyl lysine isopeptide (Lys-Gly) (interchain with G-Cter in ubiquitin)). At T302 the chain carries Phosphothreonine. Phosphoserine occurs at positions 303 and 316. A Phosphothreonine modification is found at T317. At S321 the chain carries Phosphoserine. A helical transmembrane segment spans residues 346 to 366 (ILLGTAGSWFTLDVAFYGLSL). Residues 367 to 395 (NSAVILQTIGYAGSKNVYKKLYDTAVGNL) lie on the Cytoplasmic side of the membrane. Residues 396 to 416 (ILICAGSLPGYWVSVFTVDII) traverse the membrane as a helical segment. The Extracellular segment spans residues 417-419 (GRK). The helical transmembrane segment at 420–440 (PIQLAGFIILTALFCVIGFAY) threads the bilayer. Topologically, residues 441–442 (HK) are cytoplasmic. A helical membrane pass occupies residues 443–463 (LGDHGLLALYVICQFFQNFGP). The Extracellular portion of the chain corresponds to 464–485 (NTTTFIVPGECFPTRYRSTAHG). The helical transmembrane segment at 486–506 (ISAASGKVGAIIAQTALGTLI) threads the bilayer. Residues 507-522 (DHNCARDGKPTNCWLP) lie on the Cytoplasmic side of the membrane. The helical transmembrane segment at 523-543 (HVMEIFALFMLLGIFTTLLIP) threads the bilayer. At 544 to 587 (ETKRKTLEEINELYHDEIDPATLNFRNKNNDIESSSPSQLQHEA) the chain is on the extracellular side. The tract at residues 568-587 (FRNKNNDIESSSPSQLQHEA) is disordered. Phosphoserine occurs at positions 577, 579, and 581.

This sequence belongs to the major facilitator superfamily. Phosphate:H(+) symporter (TC 2.A.1.9) family. In terms of assembly, may function as a monomer. Phosphorylated; phosphorylation increases after phosphate addition to the growth medium. Post-translationally, ubiquitinated in a phosphate-dependent manner; ubiquitination may influence the trafficking of PHO84 to the cell membrane and serve as a signal for endocytosis and internalization.

It is found in the cell membrane. The protein resides in the vacuole. The enzyme catalyses phosphate(in) + H(+)(in) = phosphate(out) + H(+)(out). It catalyses the reaction Mn(2+)(in) = Mn(2+)(out). The catalysed reaction is Zn(2+)(in) = Zn(2+)(out). It carries out the reaction Cu(2+)(in) = Cu(2+)(out). The enzyme catalyses Co(2+)(in) = Co(2+)(out). Its activity is regulated as follows. Transport activity is inhibited in the presence of the protonophore carbonylcyanide m-chlorophenylhydrazone. Transport activity is inhibited by glycerol-3-phosphate. Transport activity is inhibited by phosphonoacetic acid. Signaling activity is stimulated by glycerol-3-phosphate which acts as a nontransported PHO84 agonist that can trigger PKA signaling. Signaling activity is stimulated by arsenate. Proton-coupled high-affinity transporter for external inorganic phosphate. Acts as a transceptor, a membrane protein that in addition to its transporter activity also possesses receptor-like signaling activity; mediates activation of the protein kinase A (PKA) pathway targets during growth induction, triggered by phosphate addition to cells growth-arrested due to previous phosphate starvation. Is not an essential protein, since constitutive, low affinity phosphate transporters exist in yeast. Can function as a low affinity metal transporter that transports manganese, zinc, cobalt and copper. Plays a role in manganese homeostasis predominantly under manganese surplus conditions. The sequence is that of Inorganic phosphate transporter PHO84 (PHO84) from Saccharomyces cerevisiae (strain ATCC 204508 / S288c) (Baker's yeast).